The sequence spans 496 residues: ADP-dependent glucokinase (496 aa).

The N-terminal stretch at 1–22 (MALWRGSACAGFLALAVGCVFL) is a signal peptide. Residues 52–496 (SPESRLAAAW…GLFYSEARPD (445 aa)) form the ADPK domain. Mg(2+) is bound by residues Glu297, Glu328, and Asp481. Asp481 acts as the Proton acceptor in catalysis.

It belongs to the ADP-dependent glucokinase family. In terms of assembly, monomer. It depends on Mg(2+) as a cofactor.

It is found in the secreted. It catalyses the reaction D-glucose + ADP = D-glucose 6-phosphate + AMP + H(+). It functions in the pathway carbohydrate degradation; glycolysis. Catalyzes the phosphorylation of D-glucose to D-glucose 6-phosphate using ADP as the phosphate donor. GDP and CDP can replace ADP, but with reduced efficiency. The chain is ADP-dependent glucokinase (Adpgk) from Mus musculus (Mouse).